Consider the following 145-residue polypeptide: D-aminoacyl-tRNA deacylase (145 aa).

Positions 137–138 (GP) match the Gly-cisPro motif, important for rejection of L-amino acids motif.

This sequence belongs to the DTD family. Homodimer.

It is found in the cytoplasm. It catalyses the reaction glycyl-tRNA(Ala) + H2O = tRNA(Ala) + glycine + H(+). It carries out the reaction a D-aminoacyl-tRNA + H2O = a tRNA + a D-alpha-amino acid + H(+). In terms of biological role, an aminoacyl-tRNA editing enzyme that deacylates mischarged D-aminoacyl-tRNAs. Also deacylates mischarged glycyl-tRNA(Ala), protecting cells against glycine mischarging by AlaRS. Acts via tRNA-based rather than protein-based catalysis; rejects L-amino acids rather than detecting D-amino acids in the active site. By recycling D-aminoacyl-tRNA to D-amino acids and free tRNA molecules, this enzyme counteracts the toxicity associated with the formation of D-aminoacyl-tRNA entities in vivo and helps enforce protein L-homochirality. The sequence is that of D-aminoacyl-tRNA deacylase from Pseudomonas fluorescens (strain ATCC BAA-477 / NRRL B-23932 / Pf-5).